Here is a 35-residue protein sequence, read N- to C-terminus: uncharacterized protein (35 aa).

A helical transmembrane segment spans residues 10 to 30; sequence LMITASFFAIFIIIVVSVLLL.

The protein resides in the membrane. This is an uncharacterized protein from Salmonella typhimurium (strain LT2 / SGSC1412 / ATCC 700720).